A 239-amino-acid chain; its full sequence is Ribosomal RNA small subunit methyltransferase G (239 aa).

S-adenosyl-L-methionine is bound by residues Gly-77, Phe-82, 128-129 (AE), and Arg-146. The segment at 216-239 (KRRQTSKKYPRKPGTPNKSPLVES) is disordered.

It belongs to the methyltransferase superfamily. RNA methyltransferase RsmG family.

The protein localises to the cytoplasm. Its function is as follows. Specifically methylates the N7 position of guanine in position 535 of 16S rRNA. The polypeptide is Ribosomal RNA small subunit methyltransferase G (Staphylococcus epidermidis (strain ATCC 35984 / DSM 28319 / BCRC 17069 / CCUG 31568 / BM 3577 / RP62A)).